The primary structure comprises 119 residues: Large ribosomal subunit protein bL19 (119 aa).

Belongs to the bacterial ribosomal protein bL19 family.

This protein is located at the 30S-50S ribosomal subunit interface and may play a role in the structure and function of the aminoacyl-tRNA binding site. This chain is Large ribosomal subunit protein bL19 (rplS), found in Mycoplasma genitalium (strain ATCC 33530 / DSM 19775 / NCTC 10195 / G37) (Mycoplasmoides genitalium).